The primary structure comprises 122 residues: MTCTLKSPPKMASFFLSSLVLMFIAALILLPQGLAAYKLTPTYKPPDSELPPYRNFVPPFALNPVYNAPIYKTPNSPPIYNPPIYEAPPTYKPSKKRLPPPFQKLPPFYKQAPPSQKLPRVN.

The signal sequence occupies residues 1–36 (MTCTLKSPPKMASFFLSSLVLMFIAALILLPQGLAA). A run of 10 repeats spans residues 45–49 (PPDSE), 51–55 (PPYRN), 58–62 (PPFAL), 68–72 (APIYK), 77–81 (PPIYN), 82–86 (PPIYE), 88–92 (PPTYK), 99–103 (PPPFQ), 106–110 (PPFYK), and 113–117 (PPSQK). The segment at 45–117 (PPDSELPPYR…FYKQAPPSQK (73 aa)) is 10 X 5 AA approximate repeats of P-P-X-X-X. Residues 90-122 (TYKPSKKRLPPPFQKLPPFYKQAPPSQKLPRVN) form a disordered region.

In terms of tissue distribution, root nodules. In early nodules, expressed only in the interior of the developing nodule with no expression in other nodule tissues, including meristem. In slightly older nodules, expressed in almost all cells of the central zone. In more mature nodules, expression is restricted to the invasion zone.

This chain is Early nodulin-10 (ENOD10), found in Medicago sativa (Alfalfa).